A 154-amino-acid chain; its full sequence is MHCPFCGANDTKVIDSRLVAEGEQVRRRRECVACGERFTTFETAELVLPRLIKQDGTRQPFDEDKLRAGMQRALEKRPVSIERLEAALAHIKSRLRATGEREVKSLVVGEMVMAELRKLDEVAYIRFASVYRRFQDLDEFREEIDRLAREPAKE.

Residues 3-34 fold into a zinc finger; the sequence is CPFCGANDTKVIDSRLVAEGEQVRRRRECVAC. An ATP-cone domain is found at 49–139; it reads PRLIKQDGTR…VYRRFQDLDE (91 aa).

It belongs to the NrdR family. Requires Zn(2+) as cofactor.

Negatively regulates transcription of bacterial ribonucleotide reductase nrd genes and operons by binding to NrdR-boxes. In Pseudomonas entomophila (strain L48), this protein is Transcriptional repressor NrdR.